A 162-amino-acid chain; its full sequence is Large ribosomal subunit protein uL10 (162 aa).

Belongs to the universal ribosomal protein uL10 family. In terms of assembly, part of the ribosomal stalk of the 50S ribosomal subunit. The N-terminus interacts with L11 and the large rRNA to form the base of the stalk. The C-terminus forms an elongated spine to which L12 dimers bind in a sequential fashion forming a multimeric L10(L12)X complex.

Forms part of the ribosomal stalk, playing a central role in the interaction of the ribosome with GTP-bound translation factors. The sequence is that of Large ribosomal subunit protein uL10 from Vibrio vulnificus (strain CMCP6).